The primary structure comprises 143 residues: HTH-type transcriptional regulator MntR (143 aa).

Positions 1–63 (MPTPSMEDYL…YERYRGLVLT (63 aa)) constitute an HTH dtxR-type domain. The Mn(2+) site is built by Asp-8, Glu-11, His-77, Glu-99, Glu-102, and His-103.

This sequence belongs to the DtxR/MntR family. Homodimer.

It localises to the cytoplasm. Its activity is regulated as follows. DNA binding is strongly activated by Mn(2+). Its function is as follows. Central regulator of manganese homeostasis. The sequence is that of HTH-type transcriptional regulator MntR from Shouchella clausii (strain KSM-K16) (Alkalihalobacillus clausii).